A 273-amino-acid chain; its full sequence is WIMGHMVNAIAQIDEFVNLGANSIETDVSFDSSANPEYTYHGVPCDCGRTCTKWEHFNEFLKGLRKATTPGDSKYHEKLVLVVFDLKTDSLYDNQASDAGKKLAKSLLQNYWNNGNNGGRAYIVLSIPNLAHYKLITGFKEALTSEGHPELMDKVGYDFSGNDDIGDVANAYKKAGVTGHVWQSDGITNCLLRGLDRVRKAVANRDSSSGYINKVYYWTVDKRQSTRDALDAGVDGIMTNYPDVIADVLNESAYKAKFRIASYDDNPWETFKN.

The active site involves His5. Glu25 and Asp27 together coordinate Mg(2+). The active-site Nucleophile is the His41. 2 cysteine pairs are disulfide-bonded: Cys45/Cys51 and Cys47/Cys190. Asp85 is a Mg(2+) binding site. Residue Asn250 is glycosylated (N-linked (GlcNAc...) asparagine).

Belongs to the arthropod phospholipase D family. Class II subfamily. Mg(2+) serves as cofactor. In terms of tissue distribution, expressed by the venom gland.

It is found in the secreted. The catalysed reaction is an N-(acyl)-sphingosylphosphocholine = an N-(acyl)-sphingosyl-1,3-cyclic phosphate + choline. The enzyme catalyses an N-(acyl)-sphingosylphosphoethanolamine = an N-(acyl)-sphingosyl-1,3-cyclic phosphate + ethanolamine. It catalyses the reaction a 1-acyl-sn-glycero-3-phosphocholine = a 1-acyl-sn-glycero-2,3-cyclic phosphate + choline. It carries out the reaction a 1-acyl-sn-glycero-3-phosphoethanolamine = a 1-acyl-sn-glycero-2,3-cyclic phosphate + ethanolamine. Its function is as follows. Dermonecrotic toxins cleave the phosphodiester linkage between the phosphate and headgroup of certain phospholipids (sphingolipid and lysolipid substrates), forming an alcohol (often choline) and a cyclic phosphate. This toxin acts on sphingomyelin (SM). It may also act on ceramide phosphoethanolamine (CPE), lysophosphatidylcholine (LPC) and lysophosphatidylethanolamine (LPE), but not on lysophosphatidylserine (LPS), and lysophosphatidylglycerol (LPG). It acts by transphosphatidylation, releasing exclusively cyclic phosphate products as second products. Induces dermonecrosis, hemolysis, increased vascular permeability, edema, inflammatory response, and platelet aggregation. The chain is Dermonecrotic toxin LapSicTox-alphaIB1aiii from Loxosceles apachea (Apache recluse spider).